A 339-amino-acid chain; its full sequence is MAVQKHTVALFLAVALVAGPAASYAADAGYAPATPATPAAPATAATPATPATPATPAAVPSGKATTEEQKLIEKINAGFKAAVAAAAVVPPADKYKTFVETFGTATNKAFVEGLASGYADQSKNQLTSKLDAALKLAYEAAQGATPEAKYDAYVATLTEALRVIAGTLEVHAVKPAAEEVKVGAIPAAEVQLIDKVDAAYRTAATAANAAPANDKFTVFENTFNNAIKVSLGAAYDSYKFIPTLVAAVKQAYAAKQATAPEVKYTVSETALKKAVTAMSEAEKEATPAAAATATPTPAAATATATPAAAYATATPAAATATATPAAATATPAAAGGYKV.

The first 25 residues, 1 to 25, serve as a signal peptide directing secretion; sequence MAVQKHTVALFLAVALVAGPAASYA. Tandem repeats lie at residues 32–34, 35–37, 38–40, 41–43, 44–46, 47–49, 50–52, 53–55, and 56–58. A 9 X 3 AA tandem repeats of [PA]-A-[TA] region spans residues 32-58; the sequence is PATPATPAAPATAATPATPATPATPAA. Low complexity predominate over residues 36–58; sequence ATPAAPATAATPATPATPATPAA. Positions 36-65 are disordered; that stretch reads ATPAAPATAATPATPATPATPAAVPSGKAT. One copy of the 2-1; truncated repeat lies at 285-290; sequence ATPAAA. Positions 285–334 are 6 X 9 AA approximate tandem repeats of T-A-T-A-T-P-A-A-A; sequence ATPAAAATATPTPAAATATATPAAAYATATPAAATATATPAAATATPAAA. Tandem repeats lie at residues 292–300, 301–309, 310–318, and 319–327. The stretch at 328–334 is one 2-6; truncated repeat; sequence TATPAAA.

This sequence belongs to the Poa p IX/Phl p VI allergen family. In terms of tissue distribution, pollen, starch granules.

The sequence is that of Major pollen allergen Lol p 5b from Lolium perenne (Perennial ryegrass).